We begin with the raw amino-acid sequence, 219 residues long: Transmembrane protein 179B (219 aa).

4 helical membrane passes run 6-26, 69-89, 105-125, and 167-187; these read PLLL…ITAA, ISVC…YIAF, LGLS…LKIG, and AETA…LVLI. The disordered stretch occupies residues 195-219; it reads IRPGTEDPSAPPSETEPFFNRPGRP.

It belongs to the TMEM179 family.

Its subcellular location is the membrane. The protein is Transmembrane protein 179B (tmem179b) of Danio rerio (Zebrafish).